Here is a 468-residue protein sequence, read N- to C-terminus: Interleukin-6 receptor subunit alpha (468 aa).

An N-terminal signal peptide occupies residues 1–19; it reads MLAVGCALLAALLAAPGAA. The Extracellular portion of the chain corresponds to 20–365; it reads LAPRRCPAQE…VQDSSSVPLP (346 aa). Disulfide bonds link Cys-25/Cys-193, Cys-47/Cys-96, Cys-121/Cys-132, and Cys-165/Cys-176. An Ig-like C2-type domain is found at 26–112; sequence PAQEVARGVL…AGTVHLLVDV (87 aa). Residues Asn-55 and Asn-93 are each glycosylated (N-linked (GlcNAc...) asparagine). 2 Fibronectin type-III domains span residues 113-217 and 218-316; these read PPEE…LQPD and PPAN…TPWT. Asn-221 and Asn-245 each carry an N-linked (GlcNAc...) asparagine glycan. The WSXWS motif motif lies at 303-307; it reads WSEWS. The disordered stretch occupies residues 303 to 328; it reads WSEWSPEAMGTPWTESRSPPAENEVS. Asn-350 carries an N-linked (GlcNAc...) asparagine glycan. Residue Thr-352 is glycosylated (O-linked (GlcNAc) threonine). A helical membrane pass occupies residues 366–386; that stretch reads TFLVAGGSLAFGTLLCIAIVL. Over 387-468 the chain is Cytoplasmic; that stretch reads RFKKTWKLRA…ISNTDYFFPR (82 aa). A compositionally biased stretch (pro residues) spans 421–433; the sequence is TPVLVPLISPPVS. The disordered stretch occupies residues 421–468; that stretch reads TPVLVPLISPPVSPSSLGSDNTSSHNRPDARDPRSPYDISNTDYFFPR. Residues 446-455 show a composition bias toward basic and acidic residues; sequence NRPDARDPRS. The segment covering 458-468 has biased composition (polar residues); that stretch reads DISNTDYFFPR.

It belongs to the type I cytokine receptor family. Type 3 subfamily. Component of a hexamer of two molecules each of IL6, IL6R and IL6ST; first binds to IL6 to associate with the signaling subunit IL6ST. Interacts (via N-terminal ectodomain) with SORL1; this interaction may affect IL6-binding to IL6R, hence decrease IL6 'classic-signaling'. As to quaternary structure, also interacts with SORL1; this interaction leads to soluble IL6R internalization. May form a trimeric complex with the soluble SORL1 ectodomain and circulating IL6 receptor; this interaction might stabilize circulating IL6, hence promote IL6 'trans-signaling,. In terms of processing, a short soluble form is released from the membrane by proteolysis. The sIL6R is formed mostly by limited proteolysis of membrane-bound receptors, a process referred to as ectodomain shedding, but is also directly secreted from the cells after alternative mRNA splicing. mIL6R is cleaved by the proteases ADAM10 and ADAM17. Glycosylated. Glycosylation is dispensable for transport, signaling, and cell-surface turnover. Glycosylation at Asn-55 is a protease-regulatory exosite. Glycosylation is required for ADAM17-mediated proteolysis. Expressed in peripheral blood mononuclear cells and weakly found in urine and serum. 1%-20% of the total sIL6R in plasma is generated by alternative splicing.

It is found in the cell membrane. The protein localises to the secreted. Classic and trans-signaling are both inhibited by tocilizumab, a humanized monoclonal antibody that blocks interleukin IL6R signaling. Its function is as follows. Part of the receptor for interleukin 6. Binds to IL6 with low affinity, but does not transduce a signal. Signal activation necessitate an association with IL6ST. Activation leads to the regulation of the immune response, acute-phase reactions and hematopoiesis. The interaction with membrane-bound IL6R and IL6ST stimulates 'classic signaling', the restricted expression of the IL6R limits classic IL6 signaling to only a few tissues such as the liver and some cells of the immune system. Whereas the binding of IL6 and soluble IL6R to IL6ST stimulates 'trans-signaling'. Alternatively, 'cluster signaling' occurs when membrane-bound IL6:IL6R complexes on transmitter cells activate IL6ST receptors on neighboring receiver cells. In terms of biological role, signaling via the membrane-bound IL6R is mostly regenerative and anti-inflammatory. Drives naive CD4(+) T cells to the Th17 lineage, through 'cluster signaling' by dendritic cells. Soluble form of IL6 receptor (sIL6R) that acts as an agonist of IL6 activity. The IL6:sIL6R complex (hyper-IL6) binds to IL6ST/gp130 on cell surfaces and induces signaling also on cells that do not express membrane-bound IL6R in a process called IL6 'trans-signaling'. sIL6R is causative for the pro-inflammatory properties of IL6 and an important player in the development of chronic inflammatory diseases. In complex with IL6, is required for induction of VEGF production. Plays a protective role during liver injury, being required for maintenance of tissue regeneration. 'Trans-signaling' in central nervous system regulates energy and glucose homeostasis. The sequence is that of Interleukin-6 receptor subunit alpha from Homo sapiens (Human).